We begin with the raw amino-acid sequence, 161 residues long: Putative sporulation sigma factor-processing peptidase (161 aa).

The active site involves aspartate 38.

It belongs to the peptidase U4 family.

Probably activates the RNA polymerase sigma-35 factor at the stage II of sporulation. The chain is Putative sporulation sigma factor-processing peptidase from Bacillus thuringiensis subsp. kurstaki.